The chain runs to 150 residues: Large ribosomal subunit protein bL9 (150 aa).

Belongs to the bacterial ribosomal protein bL9 family.

Its function is as follows. Binds to the 23S rRNA. The sequence is that of Large ribosomal subunit protein bL9 from Vibrio campbellii (strain ATCC BAA-1116).